A 194-amino-acid chain; its full sequence is tRNA (pseudouridine(54)-N(1))-methyltransferase (194 aa).

Leu-125 is an S-adenosyl-L-methionine binding site.

This sequence belongs to the methyltransferase superfamily. TrmY family. In terms of assembly, homodimer.

Its subcellular location is the cytoplasm. It catalyses the reaction pseudouridine(54) in tRNA + S-adenosyl-L-methionine = N(1)-methylpseudouridine(54) in tRNA + S-adenosyl-L-homocysteine + H(+). Its function is as follows. Specifically catalyzes the N1-methylation of pseudouridine at position 54 (Psi54) in tRNAs. The sequence is that of tRNA (pseudouridine(54)-N(1))-methyltransferase from Methanospirillum hungatei JF-1 (strain ATCC 27890 / DSM 864 / NBRC 100397 / JF-1).